Reading from the N-terminus, the 71-residue chain is Ranatuerin-2PLa (71 aa).

A signal peptide spans M1–C22. Residues E23–V41 constitute a propeptide that is removed on maturation. Cysteines 66 and 71 form a disulfide.

In terms of tissue distribution, expressed by the skin glands.

It localises to the secreted. In terms of biological role, may have antimicrobial activity against the Gram-negative bacterium E.coli. This is Ranatuerin-2PLa from Lithobates palustris (Pickerel frog).